Consider the following 382-residue polypeptide: Norsolorinic acid reductase B (382 aa).

Residue D64 participates in NADP(+) binding. The Proton donor role is filled by Y69. H143 serves as a coordination point for substrate. Residues 173 to 174, Q199, 228 to 238, and 302 to 310 contribute to the NADP(+) site; these read SD, GVLNQGRFRTE, and RKVDHLTGV.

This sequence belongs to the aldo/keto reductase family. Aldo/keto reductase 2 subfamily.

It functions in the pathway mycotoxin biosynthesis; aflatoxin biosynthesis. Its function is as follows. Norsolorinic acid reductase; part of the gene cluster that mediates the biosynthesis of aflatoxins, a group of polyketide-derived furanocoumarins, and part of the most toxic and carcinogenic compounds among the known mycotoxins. The four major aflatoxins produced by A.parasiticus are aflatoxin B1 (AFB1), aflatoxin B2 (AFB2), aflatoxin G1 (AFG1) and aflatoxin G2 (AFG2). Within the aflatoxin pathway, the norsolorinic acid reductase aflE may play a role in the conversion of norsolorinic acid (NOR) to averantin (AVN). The biosynthesis of aflatoxins begins with the norsolorinic acid synthase aflC that combines a hexanoyl starter unit produced by the fatty acid synthase aflA/aflB and 7 malonyl-CoA extender units to synthesize the precursor NOR. The second step is the conversion of NOR to averantin and requires the norsolorinic acid ketoreductase aflD, which catalyzes the dehydration of norsolorinic acid to form (1'S)-averantin. The norsolorinic acid reductases aflE and aflF may also play a role in the conversion of NOR to AVN. The cytochrome P450 monooxygenase aflG then catalyzes the hydroxylation of AVN to 5'hydroxyaverantin (HAVN). The next step is performed by the 5'-hydroxyaverantin dehydrogenase aflH that transforms HAVN to 5'-oxoaverantin (OAVN) which is further converted to averufin (AVF) by aflK that plays a dual role in the pathway, as a 5'-oxoaverantin cyclase that mediates conversion of 5'-oxoaverantin, as well as a versicolorin B synthase in a later step in the pathway. The averufin oxidase aflI catalyzes the conversion of AVF to versiconal hemiacetal acetate (VHA). VHA is then the substrate for the versiconal hemiacetal acetate esterase aflJ to yield versiconal (VAL). Versicolorin B synthase aflK then converts VAL to versicolorin B (VERB) by closing the bisfuran ring of aflatoxin which is required for DNA-binding, thus giving to aflatoxin its activity as a mutagen. Then, the activity of the versicolorin B desaturase aflL leads to versicolorin A (VERA). A branch point starts from VERB since it can also be converted to dihydrodemethylsterigmatocystin (DMDHST), probably also by aflL, VERA being a precursor for aflatoxins B1 and G1, and DMDHST for aflatoxins B2 and G2. Next, the versicolorin reductase aflM and the cytochrome P450 monooxygenase aflN are involved in conversion of VERA to demethylsterigmatocystin (DMST). AflX and aflY seem also involved in this step, through probable aflX-mediated epoxide ring-opening step following versicolorin A oxidation and aflY-mediated Baeyer-Villiger oxidation required for the formation of the xanthone ring. The methyltransferase aflO then leads to the modification of DMST to sterigmatocystin (ST), and of DMDHST to dihydrosterigmatocystin (DHST). Both ST and DHST are then substrates of the O-methyltransferase aflP to yield O-methylsterigmatocystin (OMST) and dihydro-O-methylsterigmatocystin (DHOMST), respectively. Finally OMST is converted to aflatoxins B1 and G1, and DHOMST to aflatoxins B2 and G2, via the action of several enzymes including O-methylsterigmatocystin oxidoreductase aflQ, the cytochrome P450 monooxygenase aflU, but also the NADH-dependent flavin oxidoreductase nadA which is specifically required for the synthesis of AFG1. This Aspergillus parasiticus (strain ATCC 56775 / NRRL 5862 / SRRC 143 / SU-1) protein is Norsolorinic acid reductase B.